The chain runs to 201 residues: Small ribosomal subunit protein uS4c (201 aa).

Positions 20 to 44 are disordered; the sequence is GLTSKRPRAGSDLRNQSRSGKKSQY. The S4 RNA-binding domain maps to 89–152; it reads MRLDNTLFRL…NSRTLVQNLL (64 aa).

The protein belongs to the universal ribosomal protein uS4 family. Part of the 30S ribosomal subunit. Contacts protein S5. The interaction surface between S4 and S5 is involved in control of translational fidelity.

Its subcellular location is the plastid. The protein localises to the chloroplast. Functionally, one of the primary rRNA binding proteins, it binds directly to 16S rRNA where it nucleates assembly of the body of the 30S subunit. Its function is as follows. With S5 and S12 plays an important role in translational accuracy. In Aethionema grandiflorum (Persian stone-cress), this protein is Small ribosomal subunit protein uS4c (rps4).